The chain runs to 491 residues: Probable diguanylate cyclase CdgI (491 aa).

Over 1-54 (MIQSTRISMGLFFKYFLSLTKIDPGQNYISLPSIKSSTHIALLFMVSMGTQKLK) the chain is Cytoplasmic. A helical membrane pass occupies residues 55-75 (AQSFFIFSLLLTLILFCITTL). Residues 76 to 89 (YNENTNVKLIPQMN) lie on the Periplasmic side of the membrane. A helical membrane pass occupies residues 90–110 (YLMVVVALFFLNAVIFLFMLM). The Cytoplasmic segment spans residues 111–121 (KYFTNKQILPT). Residues 122 to 142 (LILSLAFLSGLIYLVETIVII) traverse the membrane as a helical segment. The Periplasmic portion of the chain corresponds to 143–158 (HKPINGSTLIQTKSND). The chain crosses the membrane as a helical span at residues 159 to 179 (VSIFYIFRQLSFICLTSLALF). The Cytoplasmic segment spans residues 180–193 (CYGKDNILDNNKKK). A helical transmembrane segment spans residues 194–214 (TGILLLALIPFLVFPLLAHNL). Residues 215 to 236 (SSYNADYSLYVVDYCPDNHTAT) lie on the Periplasmic side of the membrane. A helical transmembrane segment spans residues 237–257 (WGINYTKILVCLWAFLLFFII). The Cytoplasmic portion of the chain corresponds to 258–265 (MRTRLASE). Residues 266 to 286 (LWPLIALLCLASLCCNLLLLT) traverse the membrane as a helical segment. Residues 287-293 (LDEYNYT) are Periplasmic-facing. The chain crosses the membrane as a helical span at residues 294–314 (IWYISRGIEVSSKLFVVSFLI). The Cytoplasmic segment spans residues 315-491 (YNIFQELQLS…GGNKVIIHHI (177 aa)). Positions 356-491 (KDFCVMLVDI…GGNKVIIHHI (136 aa)) constitute a GGDEF domain. Positions 364 and 365 each coordinate Mg(2+). Residues asparagine 372, histidine 377, and aspartate 381 each contribute to the substrate site. Position 407 (glutamate 407) interacts with Mg(2+). Glutamate 407 (proton acceptor) is an active-site residue. A substrate-binding site is contributed by arginine 427.

In terms of assembly, homodimer. The cofactor is Mg(2+).

Its subcellular location is the cell inner membrane. The catalysed reaction is 2 GTP = 3',3'-c-di-GMP + 2 diphosphate. It functions in the pathway purine metabolism; 3',5'-cyclic di-GMP biosynthesis. In terms of biological role, catalyzes the synthesis of cyclic-di-GMP (c-di-GMP) via the condensation of 2 GTP molecules. This chain is Probable diguanylate cyclase CdgI, found in Escherichia coli (strain K12).